The following is a 272-amino-acid chain: Soluble interferon gamma receptor OPG193 (272 aa).

Positions 1-13 (MRYIIILAVLFIN) are cleaved as a signal peptide. N-linked (GlcNAc...) asparagine; by host glycosylation is found at N42, N150, and N267.

Belongs to the type II cytokine receptor family. Homodimer. Interacts with host IFNG.

It localises to the secreted. Counteracts the antiviral effects of host IFN-gamma. Acts as a soluble IFN-gamma receptor and thus inhibits the interaction between host IFN-gamma and its receptor. In Bos taurus (Bovine), this protein is Soluble interferon gamma receptor OPG193 (OPG193).